We begin with the raw amino-acid sequence, 179 residues long: Large ribosomal subunit protein uL6 (179 aa).

It belongs to the universal ribosomal protein uL6 family. In terms of assembly, part of the 50S ribosomal subunit.

This protein binds to the 23S rRNA, and is important in its secondary structure. It is located near the subunit interface in the base of the L7/L12 stalk, and near the tRNA binding site of the peptidyltransferase center. The polypeptide is Large ribosomal subunit protein uL6 (Chlorobium phaeovibrioides (strain DSM 265 / 1930) (Prosthecochloris vibrioformis (strain DSM 265))).